The chain runs to 412 residues: Poly-beta-1,6-N-acetyl-D-glucosamine synthase (412 aa).

4 helical membrane passes run 6 to 28 (FLLF…FYFT), 290 to 312 (LYIL…LYLG), 332 to 354 (IFLL…ALFI), and 366 to 388 (LIFV…LVAF).

The protein belongs to the glycosyltransferase 2 family.

Its subcellular location is the cell membrane. In terms of biological role, N-acetylglucosaminyltransferase that catalyzes the polymerization of single monomer units of UDP-N-acetylglucosamine to produce the linear homomer poly-beta-1,6-N-acetyl-D-glucosamine (PNAG, also referred to as PIA), a biofilm adhesin polysaccharide. Requires IcaD for full activity. This is Poly-beta-1,6-N-acetyl-D-glucosamine synthase (icaA) from Staphylococcus aureus (strain MSSA476).